The chain runs to 1323 residues: PH domain leucine-rich repeat-containing protein phosphatase 2 (1323 aa).

Residues 150 to 248 (RILLSGIYNV…WQRQASKVVS (99 aa)) enclose the PH domain. LRR repeat units follow at residues 250–271 (RIST…LFYS), 273–296 (DITY…DTLY), 300–321 (QLKG…LCEI), 323–344 (TLTE…IGNL), 346–368 (NLQT…GNLQ), 369–390 (QLSS…YEKL), 392–412 (MLDR…GVLN), 416–439 (HIKH…EGNK), 440–460 (HITH…SSLC), 461–480 (SLEQ…LSGF), 481–502 (SLRT…PVPS), 503–524 (LLTF…ACEA), 526–547 (KIEV…ILSS), 549–570 (SLRK…VEHI), 571–592 (PLEV…LFSK), 595–616 (NLRY…CTGE), 621–644 (MLQL…VGHL), 645–666 (HLRI…KLNK), 669–690 (QLEE…IANC), 692–713 (RLHT…LQLP), 714–735 (QIQF…EALP), and 737–758 (TLQD…TLDI). In terms of domain architecture, PPM-type phosphatase spans 785-1033 (SHGLAEMAGQ…DNVGAMVVYL (249 aa)). Mn(2+) contacts are provided by Asp-820, Gly-821, Lys-985, and Asp-1024. The tract at residues 1060 to 1157 (TIKDAPKPAT…DSDDDQPVEG (98 aa)) is disordered. The segment covering 1071 to 1097 (SSSSGIASEFSSEMSTSEVSSEVGSTA) has biased composition (low complexity). Positions 1122–1146 (PTPTSGLFQRQPSSATFSSNQSDNG) are enriched in polar residues. Ser-1210 carries the phosphoserine modification. Positions 1285 to 1323 (HDLEEEVKEQMKQHQDSRLEPEPHEEDRTEPPEEFDTAL) are disordered. Basic and acidic residues predominate over residues 1292–1315 (KEQMKQHQDSRLEPEPHEEDRTEP).

Interacts with AKT1, AKT3 and PRKCB isoform beta-II. Interacts with STK4, RPS6KB1, RAF1. Interacts with FKBP5; FKBP5 acts as a scaffold for PHLPP2 and Akt. Interacts with NHERF1; NHERF1 scaffolds a heterotrimeric complex with PTEN. The cofactor is Mn(2+). As to expression, in colorectal cancer tissue, expression is highest in the surface epithelium of normal colonic mucosa adjacent to the cancer tissue but is largely excluded from the crypt bases. Expression is lost or significantly decreased in 80% of tested tumors (at protein level).

The protein resides in the cytoplasm. The protein localises to the membrane. Its subcellular location is the nucleus. It catalyses the reaction O-phospho-L-seryl-[protein] + H2O = L-seryl-[protein] + phosphate. The enzyme catalyses O-phospho-L-threonyl-[protein] + H2O = L-threonyl-[protein] + phosphate. With respect to regulation, inhibited by AKT1, AKT2 and AKT3. Activated by oleic acid and arachidonic acid. In terms of biological role, protein phosphatase involved in regulation of Akt and PKC signaling. Mediates dephosphorylation in the C-terminal domain hydrophobic motif of members of the AGC Ser/Thr protein kinase family; specifically acts on 'Ser-473' of AKT1, 'Ser-660' of PRKCB isoform beta-II and 'Ser-657' of PRKCA. Akt regulates the balance between cell survival and apoptosis through a cascade that primarily alters the function of transcription factors that regulate pro- and antiapoptotic genes. Dephosphorylation of 'Ser-473' of Akt triggers apoptosis and decreases cell proliferation. Also controls the phosphorylation of AKT3. Dephosphorylates STK4 on 'Thr-387' leading to STK4 activation and apoptosis. Dephosphorylates RPS6KB1 and is involved in regulation of cap-dependent translation. Inhibits cancer cell proliferation and may act as a tumor suppressor. Dephosphorylation of PRKCA and PRKCB leads to their destabilization and degradation. Dephosphorylates RAF1 inhibiting its kinase activity. In Homo sapiens (Human), this protein is PH domain leucine-rich repeat-containing protein phosphatase 2 (PHLPP2).